The following is a 541-amino-acid chain: Transcription factor STP2 (541 aa).

The i stretch occupies residues 13 to 32 (VLTRIYDYLKALVQQVIVPN). The disordered stretch occupies residues 35–58 (DDKSSKSTPFEKLEPAKQNHPQKD). The segment at 73 to 105 (LFPKQNNKQLSLTSKSSVVPCALNLDNLETPFS) is II. Residues 204–226 (YICHYCDARFRIRGYLTRHIKKH) form a C2H2-type 1 zinc finger. The C2H2-type 2; atypical zinc finger occupies 232–267 (YHCPFFDNSISQELRCHTSGGFSRRDTYKTHLKSRH). The segment at 284-309 (GVCTQCGEHFSTSESWVENHIEAGSC) adopts a C2H2-type 3; atypical zinc-finger fold. Residues 452–462 (SSASSALSPLS) show a composition bias toward low complexity. Residues 452–497 (SSASSALSPLSGDPITTTETNKSYPLDSEQSLLEPDKTEEDAINQS) are disordered. The span at 465-482 (PITTTETNKSYPLDSEQS) shows a compositional bias: polar residues.

In terms of assembly, interacts (via Region II) with SSY5; protease component of the SPS-sensor. In terms of processing, activated by the amino acid-induced proteolytic removal of an N-terminal inhibitory domain by serine protease SSY5, an intrinsic component of the SPS-sensor. Processing requires at least 2 components of the SCF(GRR1) ubiquitin ligase complex, namely the F-box protein GRR1 and the E2 enzyme CDC34, but does not depend on the proteasome. Processing is negatively regulated by the protein phosphatase 2A regulatory subunit RTS1.

The protein localises to the cell membrane. It is found in the nucleus. Transcription factor involved in the regulation of gene expression in response to extracellular amino acid levels. Synthesized as latent cytoplasmic precursor, which, upon a signal initiated by the plasma membrane SPS (SSY1-PTR3-SSY5) amino acid sensor system, becomes proteolytically activated and relocates to the nucleus, where it induces the expression of SPS-sensor-regulated genes, including the amino-acid permeases BAP2 and BAP3. Binding to promoters is facilitated by DAL81. Involved in the repression of genes subject to nitrogen catabolite repression and genes involved in stress response. Negatively regulated by inner nuclear membrane proteins ASI1, ASI2 and ASI3, which prevent unprocessed precursor forms that escape cytoplasmic anchoring from inducing SPS-sensor-regulated genes. This chain is Transcription factor STP2 (STP2), found in Saccharomyces cerevisiae (strain ATCC 204508 / S288c) (Baker's yeast).